Here is a 215-residue protein sequence, read N- to C-terminus: 3-isopropylmalate dehydratase small subunit (215 aa).

This sequence belongs to the LeuD family. LeuD type 1 subfamily. In terms of assembly, heterodimer of LeuC and LeuD.

The catalysed reaction is (2R,3S)-3-isopropylmalate = (2S)-2-isopropylmalate. Its pathway is amino-acid biosynthesis; L-leucine biosynthesis; L-leucine from 3-methyl-2-oxobutanoate: step 2/4. In terms of biological role, catalyzes the isomerization between 2-isopropylmalate and 3-isopropylmalate, via the formation of 2-isopropylmaleate. In Hahella chejuensis (strain KCTC 2396), this protein is 3-isopropylmalate dehydratase small subunit.